The sequence spans 701 residues: Heterodisulfide reductase subunit A-like protein (701 aa).

152–175 (GGGIAGIFAALDIANAGYKVYLVE) contacts FAD. The 4Fe-4S ferredoxin-type 1 domain maps to 239-268 (KQTWVDWDLCTGCGACTDVCPPKARVPDEF). Residues cysteine 248, cysteine 251, cysteine 254, cysteine 326, cysteine 627, cysteine 630, cysteine 633, cysteine 637, cysteine 660, cysteine 663, cysteine 666, and cysteine 670 each coordinate [4Fe-4S] cluster. 4Fe-4S ferredoxin-type domains follow at residues 618 to 647 (LVSE…MTKY) and 651 to 680 (MRAE…LHGF).

It belongs to the HdrA family. As to quaternary structure, the heterodisulfide reductase is composed of three subunits; HdlA, HdlB and HdlC. It forms a complex with the F420-non-reducing hydrogenase (Mvh), which provides the reducing equivalents to the heterodisulfide reductase. [4Fe-4S] cluster serves as cofactor. The cofactor is FAD.

Its subcellular location is the cytoplasm. In terms of biological role, has oxidoreductase activity. The Hdl and Mvh subunits may together mediate electron transfer from hydrogen to an unidentified electron acceptor on the cytoplasmic side of the membrane. The protein is Heterodisulfide reductase subunit A-like protein (hdlA) of Archaeoglobus profundus (strain DSM 5631 / JCM 9629 / NBRC 100127 / Av18).